The following is a 445-amino-acid chain: Tubulin beta chain (445 aa).

Positions 11, 69, 138, 142, 143, 144, 204, and 226 each coordinate GTP. Residue Glu-69 coordinates Mg(2+). The tract at residues 426–445 (QDATAEEEGEFEEEEGDVEA) is disordered. Positions 429–445 (TAEEEGEFEEEEGDVEA) are enriched in acidic residues.

It belongs to the tubulin family. As to quaternary structure, dimer of alpha and beta chains. A typical microtubule is a hollow water-filled tube with an outer diameter of 25 nm and an inner diameter of 15 nM. Alpha-beta heterodimers associate head-to-tail to form protofilaments running lengthwise along the microtubule wall with the beta-tubulin subunit facing the microtubule plus end conferring a structural polarity. Microtubules usually have 13 protofilaments but different protofilament numbers can be found in some organisms and specialized cells. Interacts with DCX/apicortin; the interaction stabilizes microtubule assembly. Mg(2+) serves as cofactor.

It is found in the cytoplasm. It localises to the cytoskeleton. Tubulin is the major constituent of microtubules, a cylinder consisting of laterally associated linear protofilaments composed of alpha- and beta-tubulin heterodimers. Microtubules grow by the addition of GTP-tubulin dimers to the microtubule end, where a stabilizing cap forms. Below the cap, tubulin dimers are in GDP-bound state, owing to GTPase activity of alpha-tubulin. In Plasmodium falciparum (isolate 3D7), this protein is Tubulin beta chain.